A 1322-amino-acid polypeptide reads, in one-letter code: WD repeat-containing protein 17 (1322 aa).

WD repeat units lie at residues 81–121 (EHKK…VIAK), 123–164 (DSTK…SGVI), 171–211 (SFLS…QKHV), 221–261 (DEED…CITT), and 266–307 (SAAA…PIDN). The disordered stretch occupies residues 328-352 (KFSVQSPTKNHYTSSTSEAVPPPTL). A compositionally biased stretch (polar residues) spans 330–345 (SVQSPTKNHYTSSTSE). WD repeat units lie at residues 391-431 (GHVE…AVYT), 434-474 (GNEG…IIQR), 478-518 (HGTN…LHKY), 519-559 (KHPA…DQPL), 564-604 (GHTA…CINI), 607-647 (GHTA…CVDT), and 650-690 (DHGA…TPVQ).

In Homo sapiens (Human), this protein is WD repeat-containing protein 17 (WDR17).